The sequence spans 151 residues: Proteolipid protein 2 (151 aa).

The region spanning 19–137 is the MARVEL domain; that stretch reads FSRTKKGILL…DAYITFPLKQ (119 aa). 4 helical membrane passes run 25–45, 48–68, 85–105, and 112–132; these read GILL…FSAS, AYSS…VFYM, FFRS…VLVE, and IVAG…AYIT.

It is found in the membrane. In terms of biological role, may play a role in cell differentiation in the intestinal epithelium. This Rattus norvegicus (Rat) protein is Proteolipid protein 2 (Plp2).